The following is a 274-amino-acid chain: Ubiquinone biosynthesis protein COQ4 homolog, mitochondrial (274 aa).

The N-terminal 20 residues, 1-20, are a transit peptide targeting the mitochondrion; sequence MLRQTAFRSMKLNRTPGRYF. Residues 13–40 are disordered; the sequence is NRTPGRYFTTAENMDTGSSQSPPDTEQK. Over residues 22-36 the composition is skewed to polar residues; sequence TAENMDTGSSQSPPD. 4 residues coordinate Zn(2+): H177, D178, H181, and E193.

It belongs to the COQ4 family. Component of a multi-subunit COQ enzyme complex. It depends on Zn(2+) as a cofactor.

It localises to the mitochondrion inner membrane. It carries out the reaction a 4-hydroxy-3-methoxy-5-(all-trans-polyprenyl)benzoate + H(+) = a 2-methoxy-6-(all-trans-polyprenyl)phenol + CO2. It functions in the pathway cofactor biosynthesis; ubiquinone biosynthesis. Its function is as follows. Lyase that catalyzes the C1-decarboxylation of 4-hydroxy-3-methoxy-5-(all-trans-polyprenyl)benzoic acid into 2-methoxy-6-(all-trans-polyprenyl)phenol during ubiquinone biosynthesis. The sequence is that of Ubiquinone biosynthesis protein COQ4 homolog, mitochondrial from Aedes aegypti (Yellowfever mosquito).